A 235-amino-acid chain; its full sequence is Cell division protein FtsQ (235 aa).

Residues 1–6 lie on the Cytoplasmic side of the membrane; sequence MERLTR. A helical transmembrane segment spans residues 7-25; it reads WLLVMMAMLLAASGLVWFY. The Periplasmic segment spans residues 26 to 235; it reads NSNHLPVKQV…DGLPEKESEE (210 aa). Residues 30–99 enclose the POTRA domain; the sequence is LPVKQVSLKG…DTVEVVLTER (70 aa).

This sequence belongs to the FtsQ/DivIB family. FtsQ subfamily. As to quaternary structure, part of a complex composed of FtsB, FtsL and FtsQ.

It is found in the cell inner membrane. Essential cell division protein. May link together the upstream cell division proteins, which are predominantly cytoplasmic, with the downstream cell division proteins, which are predominantly periplasmic. May control correct divisome assembly. In Neisseria meningitidis serogroup B (strain ATCC BAA-335 / MC58), this protein is Cell division protein FtsQ.